We begin with the raw amino-acid sequence, 60 residues long: Large ribosomal subunit protein bL33 (60 aa).

This sequence belongs to the bacterial ribosomal protein bL33 family.

This is Large ribosomal subunit protein bL33 from Chlorobium luteolum (strain DSM 273 / BCRC 81028 / 2530) (Pelodictyon luteolum).